Consider the following 101-residue polypeptide: Small ribosomal subunit protein cS23 (101 aa).

It belongs to the chloroplast-specific ribosomal protein cS23 family. As to quaternary structure, part of the 30S ribosomal subunit.

Its subcellular location is the plastid. It localises to the chloroplast. Probably a ribosomal protein or a ribosome-associated protein. This chain is Small ribosomal subunit protein cS23 (ycf65), found in Euglena stellata.